Consider the following 144-residue polypeptide: Large ribosomal subunit protein uL11m (144 aa).

A mitochondrion-targeting transit peptide spans 1–32 (MASTRTTIIKLIVPAGKATPTPPIGPALGARG).

Belongs to the universal ribosomal protein uL11 family. Component of the mitochondrial large ribosomal subunit (mt-LSU). Mature yeast 74S mitochondrial ribosomes consist of a small (37S) and a large (54S) subunit. The 37S small subunit contains a 15S ribosomal RNA (15S mt-rRNA) and at least 32 different proteins. The 54S large subunit contains a 21S rRNA (21S mt-rRNA) and at least 45 different proteins.

It is found in the mitochondrion. Its subcellular location is the cytoplasm. Component of the mitochondrial ribosome (mitoribosome), a dedicated translation machinery responsible for the synthesis of mitochondrial genome-encoded proteins, including at least some of the essential transmembrane subunits of the mitochondrial respiratory chain. The mitoribosomes are attached to the mitochondrial inner membrane and translation products are cotranslationally integrated into the membrane. This is Large ribosomal subunit protein uL11m from Schizosaccharomyces pombe (strain 972 / ATCC 24843) (Fission yeast).